Reading from the N-terminus, the 86-residue chain is Large ribosomal subunit protein bL27 (86 aa).

Positions 1-24 (MAHKKGTGSTRNGRDSNSKRLGVK) are disordered.

The protein belongs to the bacterial ribosomal protein bL27 family.

This is Large ribosomal subunit protein bL27 from Prochlorococcus marinus (strain AS9601).